The chain runs to 246 residues: Probable transcriptional regulatory protein YebC (246 aa).

The tract at residues 1–20 is disordered; that stretch reads MAGHSKWANTRHRKAAQDAK.

The protein belongs to the TACO1 family.

The protein resides in the cytoplasm. The chain is Probable transcriptional regulatory protein YebC from Escherichia coli O6:K15:H31 (strain 536 / UPEC).